The following is a 959-amino-acid chain: DNA translocase FtsK 1 (959 aa).

A run of 3 helical transmembrane segments spans residues 1–21, 39–59, and 83–103; these read MGLG…WRYV, IWLA…LTSG, and GWTG…PMVF. Residues 104-959 lie on the Cytoplasmic side of the membrane; sequence GHSWRQLLAR…REVIAPGGGD (856 aa). A disordered region spans residues 122-427; sequence PVQADARHDE…AAPPPPAVPA (306 aa). Over residues 126–136 the composition is skewed to basic and acidic residues; the sequence is DARHDEADDGL. Composition is skewed to low complexity over residues 220-229 and 264-286; these read ATPKAATQAP and APSA…DAPA. A compositionally biased stretch (pro residues) spans 287–298; it reads SAPPEPAEPSPP. Residues 333–379 show a composition bias toward acidic residues; sequence PEPEPEPEAETEVTPEAEAEPEAEPEAEAEPEAEAEAEAEAEAEPEA. The segment covering 380–403 has biased composition (low complexity); the sequence is EAPAPESVAPALQEAEAATAAEAP. The 210-residue stretch at 605–814 folds into the FtsK domain; it reads GNPVVTDLAR…FQVSSKIDSR (210 aa). Position 625-630 (625-630) interacts with ATP; that stretch reads GSGKSV.

The protein belongs to the FtsK/SpoIIIE/SftA family. In terms of assembly, homohexamer. Forms a ring that surrounds DNA.

It localises to the cell inner membrane. Essential cell division protein that coordinates cell division and chromosome segregation. The N-terminus is involved in assembly of the cell-division machinery. The C-terminus functions as a DNA motor that moves dsDNA in an ATP-dependent manner towards the dif recombination site, which is located within the replication terminus region. Translocation stops specifically at Xer-dif sites, where FtsK interacts with the Xer recombinase, allowing activation of chromosome unlinking by recombination. FtsK orienting polar sequences (KOPS) guide the direction of DNA translocation. FtsK can remove proteins from DNA as it translocates, but translocation stops specifically at XerCD-dif site, thereby preventing removal of XerC and XerD from dif. In Ralstonia nicotianae (strain ATCC BAA-1114 / GMI1000) (Ralstonia solanacearum), this protein is DNA translocase FtsK 1 (ftsK1).